Here is a 249-residue protein sequence, read N- to C-terminus: tRNA pseudouridine synthase A (249 aa).

The active-site Nucleophile is Asp52. Tyr111 contributes to the substrate binding site.

The protein belongs to the tRNA pseudouridine synthase TruA family. In terms of assembly, homodimer.

The enzyme catalyses uridine(38/39/40) in tRNA = pseudouridine(38/39/40) in tRNA. In terms of biological role, formation of pseudouridine at positions 38, 39 and 40 in the anticodon stem and loop of transfer RNAs. The chain is tRNA pseudouridine synthase A from Brachyspira hyodysenteriae (strain ATCC 49526 / WA1).